The following is a 617-amino-acid chain: mRNA export factor MEX67 (617 aa).

The segment covering 1–10 (MSYRGRGGGY) has biased composition (gly residues). The disordered stretch occupies residues 1-24 (MSYRGRGGGYNNNRGQFSSGPHQH). LRR repeat units lie at residues 185 to 206 (DVDSIDLSNNELQDLQTLTSMA), 211 to 232 (KLQNLSLQNNNFTKIKVFETWR), and 237 to 258 (FLRELILFNNPIVQTNDPAEIQ). The NTF2 domain maps to 309 to 499 (LATNFIANYL…MIVASDTLLI (191 aa)). Disordered regions lie at residues 442-469 (EVDGSASSAPSGPRGGSRYHSGPKHKRI) and 513-554 (LPSN…TTAD). 2 stretches are compositionally biased toward low complexity: residues 445–459 (GSASSAPSGPRGGSR) and 526–542 (ATSTPSPLPPTTITTPQ). In terms of domain architecture, TAP-C spans 565–617 (QIQQELLVKILLETKLNINYGIMLCEQSNWDYQQASVNFKNSAASLPSDAFVQ).

Belongs to the NXF family. In terms of assembly, interacts with nucleoporin complex protein MTR2.

The protein localises to the nucleus. It localises to the cytoplasm. Its function is as follows. Involved in the export of mRNA from the nucleus to the cytoplasm. This Candida albicans (strain SC5314 / ATCC MYA-2876) (Yeast) protein is mRNA export factor MEX67.